The primary structure comprises 338 residues: Solute carrier family 35 member G3 (338 aa).

The tract at residues Met-1 to Ser-24 is disordered. Helical transmembrane passes span Thr-37 to Leu-57, Leu-67 to Leu-87, Phe-105 to Val-125, Cys-160 to Leu-180, Ala-190 to Tyr-210, Thr-221 to Leu-241, Leu-250 to Val-270, Leu-281 to Leu-301, and Val-305 to Ala-325. In terms of domain architecture, EamA 1 spans Leu-49–Gly-174. An EamA 2 domain is found at Tyr-272–Ala-325.

It belongs to the SLC35G solute transporter family.

The protein localises to the membrane. This chain is Solute carrier family 35 member G3 (SLC35G3), found in Pan paniscus (Pygmy chimpanzee).